A 289-amino-acid chain; its full sequence is NFU1 iron-sulfur cluster scaffold homolog, mitochondrial (289 aa).

The transit peptide at 1-56 (MAKLISYAKGGFLRNTRLTSRAVPQVYQHATSSRGFVHLTSSVAQSSAIHVSTPST) directs the protein to the mitochondrion. Positions 183 to 251 (IKELLDTRIR…IPEVESVEQV (69 aa)) are nifU. Residues C220 and C223 each contribute to the [4Fe-4S] cluster site. The interval 267-289 (ERNLKQKDTSSTAPVGIGGGPAN) is disordered.

The protein belongs to the NifU family.

The protein resides in the mitochondrion. In terms of biological role, molecular scaffold for [Fe-S] cluster assembly of mitochondrial iron-sulfur proteins. In Drosophila willistoni (Fruit fly), this protein is NFU1 iron-sulfur cluster scaffold homolog, mitochondrial.